Consider the following 64-residue polypeptide: Large ribosomal subunit protein bL35c (64 aa).

Belongs to the bacterial ribosomal protein bL35 family.

Its subcellular location is the plastid. It localises to the chloroplast. This is Large ribosomal subunit protein bL35c from Thalassiosira pseudonana (Marine diatom).